We begin with the raw amino-acid sequence, 389 residues long: Succinate--CoA ligase [ADP-forming] subunit beta (389 aa).

In terms of domain architecture, ATP-grasp spans arginine 9–lysine 236. Residues lysine 45, glycine 52–glycine 54, alanine 94, and glutamate 99 contribute to the ATP site. The Mg(2+) site is built by asparagine 191 and aspartate 205. Residues asparagine 256 and glycine 318–threonine 320 each bind substrate.

Belongs to the succinate/malate CoA ligase beta subunit family. Heterotetramer of two alpha and two beta subunits. Mg(2+) is required as a cofactor.

The enzyme catalyses succinate + ATP + CoA = succinyl-CoA + ADP + phosphate. It catalyses the reaction GTP + succinate + CoA = succinyl-CoA + GDP + phosphate. The protein operates within carbohydrate metabolism; tricarboxylic acid cycle; succinate from succinyl-CoA (ligase route): step 1/1. In terms of biological role, succinyl-CoA synthetase functions in the citric acid cycle (TCA), coupling the hydrolysis of succinyl-CoA to the synthesis of either ATP or GTP and thus represents the only step of substrate-level phosphorylation in the TCA. The beta subunit provides nucleotide specificity of the enzyme and binds the substrate succinate, while the binding sites for coenzyme A and phosphate are found in the alpha subunit. This chain is Succinate--CoA ligase [ADP-forming] subunit beta, found in Micrococcus luteus (strain ATCC 4698 / DSM 20030 / JCM 1464 / CCM 169 / CCUG 5858 / IAM 1056 / NBRC 3333 / NCIMB 9278 / NCTC 2665 / VKM Ac-2230) (Micrococcus lysodeikticus).